Consider the following 134-residue polypeptide: Ribosome-binding factor A (134 aa).

The protein belongs to the RbfA family. Monomer. Binds 30S ribosomal subunits, but not 50S ribosomal subunits or 70S ribosomes.

It localises to the cytoplasm. In terms of biological role, one of several proteins that assist in the late maturation steps of the functional core of the 30S ribosomal subunit. Associates with free 30S ribosomal subunits (but not with 30S subunits that are part of 70S ribosomes or polysomes). Required for efficient processing of 16S rRNA. May interact with the 5'-terminal helix region of 16S rRNA. This Psychrobacter cryohalolentis (strain ATCC BAA-1226 / DSM 17306 / VKM B-2378 / K5) protein is Ribosome-binding factor A.